Consider the following 683-residue polypeptide: MIDQYKHQQLQIGLVSPQQIKAWANKNLPNGEVVGEVTRPSTFHYKTDKPEKDGLFCERIFGPIKSGICACGNSRASGAENEDERFCQKCGVEFVDSRIRRYQMGYIKLACPVTHVWYLKGLPSYIANLLDKPLKKLEGLVYGDFSFARPSTKKPTFLRLRGLFEEEIASCNHSISPFFSTPGFATFRNREIATGAGAIREQLADLDLRIIIENSLVEWKELEDEGYSGDEWEDRKRRIRKVFLIRRMQLAKHFIQTNVEPEWMVLCLLPVLPPELRPIVYRSGDKVVTSDINELYKRVIRRNNNLAYLLKRSELAPADLVMCQEKLVQEAVDTLLDSGSRGQPTRDGHNKVYKSLSDVIEGKEGRFRETLLGKRVDYSGRSVIVVGPSLSLHQCGLPLEIAIKLFQLFVIRDLITKRATSNVRIAKRKIWEKEPIVWEILQEVMRGHPVLLNRAPTLHRLGIQAFQPTLVEGRTISLHPLVCKGFNADFDGDQMAVHLPLSLEAQAEARLLMFSHMNLLSPAIGDPICVPTQDMLIGLYVLTIGKRRGICANRYNSCRNYPNLKVNYNNNNNSKYRKDKEPHFSSSYDALGAYRQKLISLDSPLWLRWNLDQRVIGSREVPIEVQYESLGTYHEIYAHYLIMGNRKKEIRSIYIRTTLGHISFYREIEEAIQGFSQAYSYTT.

Residues C69, C71, C87, and C90 each coordinate Zn(2+). Residues D489, D491, and D493 each coordinate Mg(2+).

The protein belongs to the RNA polymerase beta' chain family. RpoC1 subfamily. As to quaternary structure, in plastids the minimal PEP RNA polymerase catalytic core is composed of four subunits: alpha, beta, beta', and beta''. When a (nuclear-encoded) sigma factor is associated with the core the holoenzyme is formed, which can initiate transcription. It depends on Mg(2+) as a cofactor. Requires Zn(2+) as cofactor.

It is found in the plastid. Its subcellular location is the chloroplast. It catalyses the reaction RNA(n) + a ribonucleoside 5'-triphosphate = RNA(n+1) + diphosphate. In terms of biological role, DNA-dependent RNA polymerase catalyzes the transcription of DNA into RNA using the four ribonucleoside triphosphates as substrates. This is DNA-directed RNA polymerase subunit beta' from Triticum aestivum (Wheat).